Here is a 362-residue protein sequence, read N- to C-terminus: Ferrochelatase (362 aa).

Residues histidine 212 and glutamate 294 each contribute to the Fe cation site.

Belongs to the ferrochelatase family.

Its subcellular location is the cytoplasm. It carries out the reaction heme b + 2 H(+) = protoporphyrin IX + Fe(2+). It functions in the pathway porphyrin-containing compound metabolism; protoheme biosynthesis; protoheme from protoporphyrin-IX: step 1/1. Its function is as follows. Catalyzes the ferrous insertion into protoporphyrin IX. The protein is Ferrochelatase of Leptospira biflexa.